The chain runs to 1147 residues: MSFLFKRNKGSAHKPTKPNFSKTSTTPSTSQLKHSHESNVKMSTSTVTEHRKKPTGSGSHITASPWSKLTVRGSSNVLPRYSHASHLYAEGGQEIYIFGGVASDSQPKNDLWVLNLATSQFTSLRSLGETPSPRLGHASILIGNAFIVFGGLTNHDVADRQDNSLYLLNTSSLVWQKANASGARPSGRYGHTISCLGSKICLFGGRLLDYYFNDLVCFDLNNLNTSDSRWELASVVNDPPPARAGHVAFTFSDKLYIFGGTDGANFFNDLWCYHPKQSAWSKVETFGVAPNPRAGHAASVVEGILYVFGGRASDGTFLNDLYAFRLSSKHWYKLSDLPFTPSPRSSHTLSCSGLTLVLIGGKQGKGASDSNVYMLDTSRFRLGSVPTTSGRQRNTSFFSNSTGNTNPSAFNGLLTSSRIPSYNGSKVRSTSHPSRQQYIGSSNSRFNTRHQTISTPVSGRASNDLPSPVVPTRSNSSSILQPSYNLNSHSSDRRNTNDDDQSSLNSQQLSNQAKAQGEVSPTLSFVPSSHSMEQGNGSVASANNAQSEAATRSINSISEVSEVRFPEQSSVKTVDERKSLDGRITSVTLETLVEKYSELSKQQIVEWFKSKLYEILRDSASKIDSLTEKLKVANAEKNAALCEAALEKVPLAKHNKLSDGTFSTPDKENVQSTNDAHIMQENFSLHKALEVMRETSSDLDKQLKDATASQKELIVQTSSFQKELVEERERHNAISKRLQEIESLYRDRELLVTNLEDQLVDQTVTINKFAFERDQFRERSMGFENTIKDLTRKMEATDMLNVSLHESLRSVQTENSELVTEMALLKAELVKKQAIIDANANIYDKLTADHTNYETVSADINQNLKETLDKLLNGSSDFKNNEIELLHDQIRITNAKLEKREKLINASKYIEDTLRSEIQEAAEKVSNLEFSNFNLKEENSNMQLQLMKALEQRNTGAKQLVNLRMQLSTATSELDMLKLKLRTTALALEESPDDYSDILSILRADMSPFHDLHKQCGVLIDTLNGVKRGFGIFEKKFTDYHKFLENISDKLKSEEDTSLETPIHENQSIQSDQIKEVGEVLSAIKSLSDSVMLLKNQIDDLAKEKLPLSSSDDEKVNIKEKTDFMKLLVKSGLSNPPAKEPVHDNEN.

Basic residues predominate over residues 1–16 (MSFLFKRNKGSAHKPT). Residues 1-64 (MSFLFKRNKG…TGSGSHITAS (64 aa)) are disordered. Residues 18–32 (PNFSKTSTTPSTSQL) are compositionally biased toward polar residues. 6 Kelch repeats span residues 94-144 (EIYI…LIGN), 146-198 (FIVF…CLGS), 199-253 (KICL…TFSD), 254-303 (KLYI…VVEG), 305-351 (LYVF…TLSC), and 355-402 (TLVL…SNST). 2 disordered regions span residues 384–403 (SVPT…NSTG) and 408–547 (SAFN…NAQS). 3 stretches are compositionally biased toward polar residues: residues 385 to 403 (VPTT…NSTG), 408 to 465 (SAFN…SNDL), and 472 to 489 (TRSN…LNSH). Residues 502-512 (SSLNSQQLSNQ) show a composition bias toward low complexity. A Phosphoserine modification is found at S503. The segment covering 519–547 (VSPTLSFVPSSHSMEQGNGSVASANNAQS) has biased composition (polar residues). An interaction with tea4 region spans residues 538–1147 (SVASANNAQS…AKEPVHDNEN (610 aa)). 4 coiled-coil regions span residues 611-649 (KLYE…LEKV), 716-838 (QTSS…IIDA), 879-990 (KNNE…ALEE), and 1084-1105 (IKSL…AKEK). The tract at residues 948 to 1147 (KALEQRNTGA…AKEPVHDNEN (200 aa)) is retention at microtubule cell ends.

As to quaternary structure, major component of the tea1 cell-end complex. Interacts with rax2, tea4 and tip1. Interacts with for3 in the presence of tea4.

The protein resides in the cytoplasm. It is found in the cytoskeleton. Functionally, cell polarity protein. Acts as an end marker, directing the growth machinery to the cell poles. Involved in the regulation of microtubular organization, affecting the maintenance of a single central axis. Prevents the curling of microtubule tips around the cell ends and is required for the retention of polarity factors such as pom1, tip1 and tea2 at the cell ends, necessary for the cell to grow in a straight line. Links tip1 and tea4 in a common complex. The sequence is that of Tip elongation aberrant protein 1 (tea1) from Schizosaccharomyces pombe (strain 972 / ATCC 24843) (Fission yeast).